A 338-amino-acid polypeptide reads, in one-letter code: Anthranilate phosphoribosyltransferase (338 aa).

5-phospho-alpha-D-ribose 1-diphosphate-binding positions include Gly81, Gly84–Asp85, Ser89, Asn91–Thr94, Lys109–Ser117, and Ser121. Anthranilate is bound at residue Gly81. Ser93 lines the Mg(2+) pocket. Asn112 is a binding site for anthranilate. Anthranilate is bound at residue Arg167. 2 residues coordinate Mg(2+): Asp226 and Glu227.

The protein belongs to the anthranilate phosphoribosyltransferase family. As to quaternary structure, homodimer. The cofactor is Mg(2+).

It carries out the reaction N-(5-phospho-beta-D-ribosyl)anthranilate + diphosphate = 5-phospho-alpha-D-ribose 1-diphosphate + anthranilate. Its pathway is amino-acid biosynthesis; L-tryptophan biosynthesis; L-tryptophan from chorismate: step 2/5. Catalyzes the transfer of the phosphoribosyl group of 5-phosphorylribose-1-pyrophosphate (PRPP) to anthranilate to yield N-(5'-phosphoribosyl)-anthranilate (PRA). The polypeptide is Anthranilate phosphoribosyltransferase (Thioalkalivibrio sulfidiphilus (strain HL-EbGR7)).